A 95-amino-acid polypeptide reads, in one-letter code: MKLLAVAALLAGAAIAAPTSNTGGGSVCPSGLYSNPQCCSTVIIGVIALDCKSPSEVPRDGTDLRNICAKTGQKAACCVIPVAGQALLCETAPGA.

A signal peptide spans 1 to 16 (MKLLAVAALLAGAAIA). 4 cysteine pairs are disulfide-bonded: cysteine 28–cysteine 77, cysteine 38–cysteine 68, cysteine 39–cysteine 51, and cysteine 78–cysteine 89.

It belongs to the cerato-ulmin hydrophobin family.

It is found in the secreted. It localises to the cell wall. Functionally, aerial growth, conidiation, and dispersal of filamentous fungi in the environment rely upon a capability of their secreting small amphipathic proteins called hydrophobins (HPBs) with low sequence identity. Class I can self-assemble into an outermost layer of rodlet bundles on aerial cell surfaces, conferring cellular hydrophobicity that supports fungal growth, development and dispersal; whereas Class II form highly ordered films at water-air interfaces through intermolecular interactions but contribute nothing to the rodlet structure. Hyd3 plays a neglectable role in hyphal growth and asexual development and does not seem involved in cellular hydrophobicity, conidial adhesion, stress tolerance nor insect pathogenicity. The polypeptide is Class II hydrophobin 3 (Metarhizium robertsii (strain ARSEF 23 / ATCC MYA-3075) (Metarhizium anisopliae (strain ARSEF 23))).